The following is a 267-amino-acid chain: MKVALVYNEKVETLAVVKALEKLLDSRKIEIDPENPDVVITIGGDGTLISGFHKYQNLVDQIRFIGVHTGHLGFYTDWRNFEIGKMVDNLTKKQPSSASYPLLELIITTGSGEKKKLLALNEATIKRVSKTLKADVYIRDQFFESFKGDGLCVSTPTGSTAYSKSLGGAVIHPRLKALQMTEIASINNRVFRTLSSPIVIAPDEWITIKPESDDHYVVTYDGYEFNHKHIKKIEYRISQHVIRFDKYQHTHFWNRVEDAFIGQPKNK.

Residue Asp45 is the Proton acceptor of the active site. Residues 45–46 (DG), 121–122 (NE), Lys147, Asp149, 160–165 (TAYSKS), and Ala184 contribute to the NAD(+) site.

It belongs to the NAD kinase family. A divalent metal cation is required as a cofactor.

The protein resides in the cytoplasm. It carries out the reaction NAD(+) + ATP = ADP + NADP(+) + H(+). In terms of biological role, involved in the regulation of the intracellular balance of NAD and NADP, and is a key enzyme in the biosynthesis of NADP. Catalyzes specifically the phosphorylation on 2'-hydroxyl of the adenosine moiety of NAD to yield NADP. The chain is NAD kinase from Lactobacillus gasseri (strain ATCC 33323 / DSM 20243 / BCRC 14619 / CIP 102991 / JCM 1131 / KCTC 3163 / NCIMB 11718 / NCTC 13722 / AM63).